We begin with the raw amino-acid sequence, 319 residues long: Alpha-hemolysin (319 aa).

The first 26 residues, 1 to 26 (MKTRIVSSVTTTLLLGSILMNPVANA), serve as a signal peptide directing secretion.

It belongs to the aerolysin family. Self-assembles to form first a non-lytic oligomeric intermediate and then, a mushroom-shaped homoheptamer structure of 100 Angstroms in length and up to 100 Angstroms in diameter.

It is found in the secreted. Functionally, alpha-toxin binds to the membrane of eukaryotic cells resulting in the release of low-molecular weight molecules and leading to an eventual osmotic lysis. Inhibits host neutrophil chemotaxis to the lesion region. Heptamer oligomerization and pore formation is required for lytic activity. In Staphylococcus aureus (strain NCTC 8325 / PS 47), this protein is Alpha-hemolysin (hly).